A 233-amino-acid polypeptide reads, in one-letter code: Ribonuclease HII (233 aa).

An RNase H type-2 domain is found at 21 to 211 (KVIAGVDEVG…LDALPQWRHL (191 aa)). 3 residues coordinate a divalent metal cation: Asp27, Glu28, and Asp119.

Belongs to the RNase HII family. Requires Mn(2+) as cofactor. It depends on Mg(2+) as a cofactor.

The protein resides in the cytoplasm. It catalyses the reaction Endonucleolytic cleavage to 5'-phosphomonoester.. Endonuclease that specifically degrades the RNA of RNA-DNA hybrids. The polypeptide is Ribonuclease HII (Streptomyces avermitilis (strain ATCC 31267 / DSM 46492 / JCM 5070 / NBRC 14893 / NCIMB 12804 / NRRL 8165 / MA-4680)).